We begin with the raw amino-acid sequence, 163 residues long: uncharacterized protein (163 aa).

Residues 1 to 10 are compositionally biased toward basic and acidic residues; the sequence is MTHPLPHDSH. 2 disordered regions span residues 1 to 21 and 71 to 112; these read MTHP…VNKS and SKQP…EQRR. A compositionally biased stretch (polar residues) spans 90-105; that stretch reads PASSLQDHSRLTSLSR.

This is an uncharacterized protein from Homo sapiens (Human).